A 470-amino-acid chain; its full sequence is Beta-Ala-Xaa dipeptidase (470 aa).

His-87 is a Zn(2+) binding site. Asp-89 is a catalytic residue. Zn(2+) is bound at residue Asp-119. Glu-153 acts as the Proton acceptor in catalysis. Zn(2+)-binding residues include Glu-154 and Asp-177. Residue Arg-350 participates in substrate binding. His-439 serves as a coordination point for Zn(2+).

The protein belongs to the peptidase M20A family. It depends on Zn(2+) as a cofactor.

The protein resides in the cytoplasm. Its activity is regulated as follows. Fully inhibited by 1,10-phenanthroline or EDTA. Is a relatively unspecific dipeptidase cleaving a variety of dipeptides, notably those with an N-terminal beta-Ala or D-Ala residue, e.g. carnosine (beta-Ala-His). To a lesser extent, also shows aminopeptidase activity, since it is able to catalyze the removal of the N-terminal amino acid from a few distinct tripeptides. This is Beta-Ala-Xaa dipeptidase (pepV) from Lactobacillus delbrueckii subsp. lactis.